The sequence spans 304 residues: Phosphatidylserine decarboxylase proenzyme (304 aa).

Catalysis depends on charge relay system; for autoendoproteolytic cleavage activity residues aspartate 90, histidine 147, and serine 253. Serine 253 (schiff-base intermediate with substrate; via pyruvic acid; for decarboxylase activity) is an active-site residue. Serine 253 is modified (pyruvic acid (Ser); by autocatalysis).

Belongs to the phosphatidylserine decarboxylase family. PSD-B subfamily. Prokaryotic type I sub-subfamily. As to quaternary structure, heterodimer of a large membrane-associated beta subunit and a small pyruvoyl-containing alpha subunit. Requires pyruvate as cofactor. Is synthesized initially as an inactive proenzyme. Formation of the active enzyme involves a self-maturation process in which the active site pyruvoyl group is generated from an internal serine residue via an autocatalytic post-translational modification. Two non-identical subunits are generated from the proenzyme in this reaction, and the pyruvate is formed at the N-terminus of the alpha chain, which is derived from the carboxyl end of the proenzyme. The autoendoproteolytic cleavage occurs by a canonical serine protease mechanism, in which the side chain hydroxyl group of the serine supplies its oxygen atom to form the C-terminus of the beta chain, while the remainder of the serine residue undergoes an oxidative deamination to produce ammonia and the pyruvoyl prosthetic group on the alpha chain. During this reaction, the Ser that is part of the protease active site of the proenzyme becomes the pyruvoyl prosthetic group, which constitutes an essential element of the active site of the mature decarboxylase.

The protein localises to the cell membrane. It carries out the reaction a 1,2-diacyl-sn-glycero-3-phospho-L-serine + H(+) = a 1,2-diacyl-sn-glycero-3-phosphoethanolamine + CO2. It functions in the pathway phospholipid metabolism; phosphatidylethanolamine biosynthesis; phosphatidylethanolamine from CDP-diacylglycerol: step 2/2. Functionally, catalyzes the formation of phosphatidylethanolamine (PtdEtn) from phosphatidylserine (PtdSer). This chain is Phosphatidylserine decarboxylase proenzyme, found in Dickeya dadantii (strain 3937) (Erwinia chrysanthemi (strain 3937)).